Consider the following 418-residue polypeptide: MTLLALGINHKTAPVDLRERVTFSPETLDQALESLLAQPMVQGGVVLSTCNRTELYLSVEEQDNLQEALIRWLCNYHGLNEEDLRKSLYWHQDNDAVSHLMRVASGLDSLVLGEPQILGQVKKAFADSSRGHLNVSELERMFQKSFSVAKRVRTETDIGASAVSVAFAACTLARQIFESLSSVTVLLVGAGETIELVARHLREHHVRKMVIANRTRERAQALADEVGAEVIALSDIDERLKEADIIISSTASPLPIIGKGMVERALKARRNQPMLLVDIAVPRDVEPEVGKLANAYLYSVDDLQNIIQHNLAQRKAAAVQAESIVEQETSEFMAWLRAQSASETIREYRSQSEQVREELTAKALAALEQGGDAQEIMQDLARKLTNRLIHAPTKSLQQAARDGDDERLHILRNSLGLE.

Substrate contacts are provided by residues 49–52 (TCNR), Ser-109, 114–116 (EPQ), and Gln-120. Cys-50 serves as the catalytic Nucleophile. An NADP(+)-binding site is contributed by 189–194 (GAGETI).

This sequence belongs to the glutamyl-tRNA reductase family. Homodimer.

It carries out the reaction (S)-4-amino-5-oxopentanoate + tRNA(Glu) + NADP(+) = L-glutamyl-tRNA(Glu) + NADPH + H(+). Its pathway is porphyrin-containing compound metabolism; protoporphyrin-IX biosynthesis; 5-aminolevulinate from L-glutamyl-tRNA(Glu): step 1/2. In terms of biological role, catalyzes the NADPH-dependent reduction of glutamyl-tRNA(Glu) to glutamate 1-semialdehyde (GSA). This chain is Glutamyl-tRNA reductase, found in Klebsiella pneumoniae (strain 342).